Reading from the N-terminus, the 394-residue chain is Mitogen-activated protein kinase 2 (394 aa).

The segment covering 1 to 10 has biased composition (polar residues); that stretch reads MDGPAQQTDT. A disordered region spans residues 1–27; it reads MDGPAQQTDTVMAEAAAAQQPAPPSQP. Positions 61 to 346 constitute a Protein kinase domain; sequence KPPIMPIGKG…VEDALAHPYL (286 aa). Residues 67–75 and Lys90 each bind ATP; that span reads IGKGAYGIV. Catalysis depends on Asp187, which acts as the Proton acceptor. Thr219 bears the Phosphothreonine mark. The short motif at 219–221 is the TXY element; sequence TEY. Tyr221 carries the phosphotyrosine modification. Thr224 is subject to Phosphothreonine.

This sequence belongs to the protein kinase superfamily. CMGC Ser/Thr protein kinase family. MAP kinase subfamily. Mg(2+) serves as cofactor. Post-translationally, activated by cold, wounding and UV-C in a cultivar-dependent manner; phosphorylated at Tyr-221 in cv. Subicho but not in cv. Pungchon. As to expression, expressed constitutively in roots, stems, flowers and fruits of the hot pepper (cv. Subicho).

It carries out the reaction L-seryl-[protein] + ATP = O-phospho-L-seryl-[protein] + ADP + H(+). The enzyme catalyses L-threonyl-[protein] + ATP = O-phospho-L-threonyl-[protein] + ADP + H(+). With respect to regulation, activated by threonine and tyrosine phosphorylation. In terms of biological role, protein kinase involved in oxidative stress-mediated and innate immune MAP kinase signaling cascades. The chain is Mitogen-activated protein kinase 2 from Capsicum annuum (Capsicum pepper).